We begin with the raw amino-acid sequence, 1475 residues long: Protein STU1 (1475 aa).

2 disordered regions span residues 870–913 (REST…EPDL) and 1113–1134 (DGES…NRPA). Over residues 887-896 (DGAHGGDARD) the composition is skewed to basic and acidic residues.

It belongs to the CLASP family. In terms of assembly, interacts with microtubules.

The protein localises to the cytoplasm. It localises to the cytoskeleton. The protein resides in the nucleus. Its subcellular location is the spindle. Functionally, microtubule binding protein that promotes the stabilization of dynamic microtubules. Required for mitotic spindle formation. In Eremothecium gossypii (strain ATCC 10895 / CBS 109.51 / FGSC 9923 / NRRL Y-1056) (Yeast), this protein is Protein STU1 (STU1).